We begin with the raw amino-acid sequence, 436 residues long: Histidinol dehydrogenase (436 aa).

NAD(+) is bound by residues tyrosine 135, glutamine 197, and asparagine 220. Substrate-binding residues include threonine 243, glutamine 265, and histidine 268. Zn(2+)-binding residues include glutamine 265 and histidine 268. Residues glutamate 334 and histidine 335 each act as proton acceptor in the active site. 4 residues coordinate substrate: histidine 335, aspartate 368, glutamate 422, and histidine 427. Aspartate 368 contacts Zn(2+). Residue histidine 427 coordinates Zn(2+).

This sequence belongs to the histidinol dehydrogenase family. Requires Zn(2+) as cofactor.

It carries out the reaction L-histidinol + 2 NAD(+) + H2O = L-histidine + 2 NADH + 3 H(+). The protein operates within amino-acid biosynthesis; L-histidine biosynthesis; L-histidine from 5-phospho-alpha-D-ribose 1-diphosphate: step 9/9. In terms of biological role, catalyzes the sequential NAD-dependent oxidations of L-histidinol to L-histidinaldehyde and then to L-histidine. In Deinococcus radiodurans (strain ATCC 13939 / DSM 20539 / JCM 16871 / CCUG 27074 / LMG 4051 / NBRC 15346 / NCIMB 9279 / VKM B-1422 / R1), this protein is Histidinol dehydrogenase.